A 225-amino-acid chain; its full sequence is Endonuclease V (225 aa).

2 residues coordinate Mg(2+): Asp43 and Asp110. Interaction with target DNA regions lie at residues Lys139 to Arg141 and His214 to Lys221.

It belongs to the endonuclease V family. Mg(2+) is required as a cofactor.

It is found in the cytoplasm. It carries out the reaction Endonucleolytic cleavage at apurinic or apyrimidinic sites to products with a 5'-phosphate.. Functionally, DNA repair enzyme involved in the repair of deaminated bases. Selectively cleaves double-stranded DNA at the second phosphodiester bond 3' to a deoxyinosine leaving behind the intact lesion on the nicked DNA. In vitro, can also cleave single-stranded substrates with inosine, double-stranded DNA with apurinic sites, or DNA sites with uracil or a mismatched base. When present in molar excess, two protein molecules can bind to the same DNA substrate and effect cleavage of both strands (in vitro). The polypeptide is Endonuclease V (Thermotoga maritima (strain ATCC 43589 / DSM 3109 / JCM 10099 / NBRC 100826 / MSB8)).